The sequence spans 453 residues: Armadillo repeat-containing X-linked protein 1 (453 aa).

Over 1–6 (MGRTRE) the chain is Mitochondrial intermembrane. Mitochondrion outer membrane (MOM)-targeting sequence regions lie at residues 1–6 (MGRTRE) and 26–36 (RLAWGRDENEK). The helical; Signal-anchor transmembrane segment at 7-29 (AGCVAAGVVIGAGACYCVYRLAW) threads the bilayer. Residues 30-453 (GRDENEKIWD…VKVLKVLTKL (424 aa)) lie on the Cytoplasmic side of the membrane. A disordered region spans residues 140–182 (PSLPCPGGRGGGCHPTRSGSRAGGRASGKSKGKARSKSTRAPA). The segment covering 167-177 (GKSKGKARSKS) has biased composition (basic residues). ARM repeat units follow at residues 195–235 (PYKI…NNAA), 237–276 (SFNQ…NLSV), 358–398 (PAMT…NIND), and 415–453 (SSLF…LTKL).

This sequence belongs to the eutherian X-chromosome-specific Armcx family. As to quaternary structure, interacts with MIRO1.

It localises to the mitochondrion. It is found in the mitochondrion outer membrane. Its function is as follows. Regulates mitochondrial transport during axon regeneration. Increases the proportion of motile mitochondria by recruiting stationary mitochondria into the motile pool. Enhances mitochondria movement and neurite growth in both adult axons and embryonic neurons. Promotes neuronal survival and axon regeneration after nerve injury. May link mitochondria to the Trak1-kinesin motor complex via its interaction with MIRO1. The protein is Armadillo repeat-containing X-linked protein 1 (ARMCX1) of Pongo abelii (Sumatran orangutan).